Consider the following 882-residue polypeptide: Valine--tRNA ligase (882 aa).

The 'HIGH' region motif lies at 50 to 60; that stretch reads PNVTGKLHLGH. The 'KMSKS' region signature appears at 526–530; sequence KMSKS. Lys529 lines the ATP pocket. Positions 810–881 form a coiled coil; the sequence is LEALIDLDLE…VLERIETLKE (72 aa).

The protein belongs to the class-I aminoacyl-tRNA synthetase family. ValS type 1 subfamily. Monomer.

It is found in the cytoplasm. It carries out the reaction tRNA(Val) + L-valine + ATP = L-valyl-tRNA(Val) + AMP + diphosphate. In terms of biological role, catalyzes the attachment of valine to tRNA(Val). As ValRS can inadvertently accommodate and process structurally similar amino acids such as threonine, to avoid such errors, it has a 'posttransfer' editing activity that hydrolyzes mischarged Thr-tRNA(Val) in a tRNA-dependent manner. The chain is Valine--tRNA ligase from Listeria innocua serovar 6a (strain ATCC BAA-680 / CLIP 11262).